Consider the following 323-residue polypeptide: Ethanolamine-phosphate cytidylyltransferase (323 aa).

It belongs to the cytidylyltransferase family.

The protein localises to the cytoplasm. Its subcellular location is the nucleus. The catalysed reaction is phosphoethanolamine + CTP + H(+) = CDP-ethanolamine + diphosphate. Its pathway is phospholipid metabolism; phosphatidylethanolamine biosynthesis; phosphatidylethanolamine from ethanolamine: step 2/3. Functionally, ethanolamine-phosphate cytidylyltransferase which catalyzes the second step of phosphatidylethanolamine biosynthesis. Involved in the maintenance of plasma membrane and required for proper sporulation. This Saccharomyces cerevisiae (strain ATCC 204508 / S288c) (Baker's yeast) protein is Ethanolamine-phosphate cytidylyltransferase.